The chain runs to 67 residues: Small ribosomal subunit protein eS17 (67 aa).

The protein belongs to the eukaryotic ribosomal protein eS17 family.

In Korarchaeum cryptofilum (strain OPF8), this protein is Small ribosomal subunit protein eS17.